The primary structure comprises 532 residues: Exopolysaccharide phosphotransferase CpsY (532 aa).

The protein belongs to the stealth family.

The sequence is that of Exopolysaccharide phosphotransferase CpsY (cpsY) from Mycobacterium bovis (strain ATCC BAA-935 / AF2122/97).